A 302-amino-acid chain; its full sequence is Orotidine 5'-phosphate decarboxylase (302 aa).

The active-site Proton donor is the K105.

It belongs to the OMP decarboxylase family. Type 2 subfamily.

It catalyses the reaction orotidine 5'-phosphate + H(+) = UMP + CO2. It functions in the pathway pyrimidine metabolism; UMP biosynthesis via de novo pathway; UMP from orotate: step 2/2. This is Orotidine 5'-phosphate decarboxylase from Rhodopirellula baltica (strain DSM 10527 / NCIMB 13988 / SH1).